The chain runs to 296 residues: Acetylglutamate kinase (296 aa).

Substrate is bound by residues 67–68 (GG), arginine 89, and asparagine 194.

Belongs to the acetylglutamate kinase family. ArgB subfamily.

The protein localises to the cytoplasm. The catalysed reaction is N-acetyl-L-glutamate + ATP = N-acetyl-L-glutamyl 5-phosphate + ADP. Its pathway is amino-acid biosynthesis; L-arginine biosynthesis; N(2)-acetyl-L-ornithine from L-glutamate: step 2/4. Catalyzes the ATP-dependent phosphorylation of N-acetyl-L-glutamate. This Brucella canis (strain ATCC 23365 / NCTC 10854 / RM-666) protein is Acetylglutamate kinase.